Here is a 932-residue protein sequence, read N- to C-terminus: MSEEEKELKNRKKVIIGLGIFIFIFLFGFLSEILSFITDYQWFQELGYESVFLTKLKTQLQIGIPLFIVGTILYYLYLIGLKKEYYKQIKSYHMDISEKRVNQILILPAFVFGLMTSTSVAGSLWFDILLYANAKPFNLTDPLFNNDITYYLLELPFLKQLLNTVTSILFLMVIITVIFYVIMFLIRRPTLYEVKADLQWNSNFFVSLLQIALKQFAALGVIFFLVLAARYYLGVYDLLYSTRGVVYGASYTDTHVTLWVYRAQILASLLSATGVVYAYVKRNPKLLLIAPISIIAVGILGNVISLGVQNFIVSPNEIARELPYIEHNLSYTRRAYGIGEIQETDFPYDTELTREDIENNQEIIDNIRINDYRPALEVYNQIQAFRPYYRFVDVDIDRYWVNGEYRQVFIAPRELDQRELSDNAQTWINQTLKYTHGYGVALSPVNEVTSGGQPVLWMRNFPLVSSVDIEVTRPEIYFGELTDQYIIVNTKEKEFDYPLDNDNAETLYEGTAGVPLKGVNRLLYSWRQGTLKMLLSGNITSESRIVFDRNIVTRMNKIAPFITYDEDPYIVINEGKLYWMIDGYTISGNFPYAEPYMAGNNNYIRNSVKVVIDAYNGTVDYYISDEEDPIILTYQAIFPDLFKPLDDMPEGLKAHIRYPQVLFDIQSEVYATYHMNNPRVFYNKEDLWRIAREKYDQNEQTIESQYMMMKLPGEESEEFVISVPYTPIRLDNMRALLVARNDGEQYGELIAYRMPKDQNVYGPKQIEDRIDQNTTISQNLSLWGEGGSSVIRGNLLVVPIENSLLYVEPLYIRATSGTSLPEVKMVIVSFGDQIVMEPTLEEALNRIFGARVEEIREEIQEEVEGDTDGETITEEITEGLGEASQLIRRASEVFDRAQEASRQGNWSAYGDALEELEQVLRQLQETTQVLEN.

7 consecutive transmembrane segments (helical) span residues 14–34 (VIIG…SEIL), 60–80 (LQIG…YLIG), 104–124 (ILIL…AGSL), 166–186 (TSIL…MFLI), 208–228 (LLQI…LVLA), 256–276 (VTLW…TGVV), and 286–306 (LLLI…VISL).

Belongs to the UPF0182 family.

Its subcellular location is the cell membrane. In Alkaliphilus metalliredigens (strain QYMF), this protein is UPF0182 protein Amet_0022.